A 401-amino-acid polypeptide reads, in one-letter code: MSREVYICDAVRTPIGRFGGSLAAVRADDLAAVPVKALVERNPQVDWSQLDEVYLGCANQAGEDNRNVARMALLLAGLPDSVPGVTLNRLCASGMDAVGTAFRAIASGEAELVIAGGVESMSRAPYVMGKADSAFGRGQKIEDTTIGWRFINPLMKAQYGVDAMPETADNVADDYKVSRADQDAFALRSQQLAGRAQAAGYFAEEIVPVVIKGKKGETVVDADEHLRPDTTLEALAKLKPVNGPDKTVTAGNASGVNDGSVALILASAEAVKKHGLKARAKVLGMASAGVAPRVMGIGPVPAVRKLLERLNLSVADFDVIELNEAFAAQGLAVTRELGIADDDARVNPNGGAIALGHPLGASGARLVLTAVHQLEKSGGQRGLCTMCVGVGQGVALAVERV.

Cysteine 91 acts as the Acyl-thioester intermediate in catalysis. Active-site proton acceptor residues include histidine 357 and cysteine 387.

The protein belongs to the thiolase-like superfamily. Thiolase family. Homotetramer.

It catalyses the reaction succinyl-CoA + acetyl-CoA = 3-oxoadipyl-CoA + CoA. Its pathway is aromatic compound metabolism; beta-ketoadipate pathway; acetyl-CoA and succinyl-CoA from 3-oxoadipate: step 2/2. Functionally, catalyzes thiolytic cleavage of beta-ketoadipyl-CoA to succinyl-CoA and acetyl-CoA. This is Beta-ketoadipyl-CoA thiolase (pcaF) from Pseudomonas knackmussii (strain DSM 6978 / CCUG 54928 / LMG 23759 / B13).